An 89-amino-acid chain; its full sequence is Small ribosomal subunit protein uS15 (89 aa).

Belongs to the universal ribosomal protein uS15 family. In terms of assembly, part of the 30S ribosomal subunit. Forms a bridge to the 50S subunit in the 70S ribosome, contacting the 23S rRNA.

One of the primary rRNA binding proteins, it binds directly to 16S rRNA where it helps nucleate assembly of the platform of the 30S subunit by binding and bridging several RNA helices of the 16S rRNA. Its function is as follows. Forms an intersubunit bridge (bridge B4) with the 23S rRNA of the 50S subunit in the ribosome. The sequence is that of Small ribosomal subunit protein uS15 from Haemophilus influenzae (strain 86-028NP).